A 127-amino-acid polypeptide reads, in one-letter code: MAKSQIEPGVPITLQELYPSSLFYKEGVSLRVTAMLRGYSVETAIGVIEDGGRSLKINTQNIRDVSFRVGSIYQFIGELHIEQPNNEAILQARTGRNVDGIDMNLYRKTIELLRQFLKEEDNSNMVE.

It belongs to the TEN1 family. As to quaternary structure, component of the CST complex, composed of CTC1, TEN1 and STN1. Interacts with STN1. No interaction with POT1A, but competes with it for STN1 binding. In terms of tissue distribution, ubiquitous. High expression in meristematic tissues and in vasculature.

Its subcellular location is the nucleus. It localises to the chromosome. The protein resides in the telomere. Required for the maintenance of meristems and stem cells through the reduction of DNA damage. Promotes telomere integrity by maintaining telomere length and proper architecture of the chromosome terminus. Negatively regulates telomerase repeat addition processivity. Hampers contacts between enzymatically active telomerase and CST complex. In Arabidopsis thaliana (Mouse-ear cress), this protein is CST complex subunit TEN1.